Consider the following 325-residue polypeptide: Centromere protein O (325 aa).

The segment at M1–L35 is disordered. Residues L55–G112 are a coiled coil.

It belongs to the CENP-O/MCM21 family. In terms of assembly, component of the CENPA-HI complex, at least composed of CENPH, CENPI, CENPK, CENPL, CENPM, CENPO and CENPP. Component of a discrete complex composed of at least CENPO, CENPP, CENPQ, CENPR and CENPU.

Its subcellular location is the nucleus. It localises to the chromosome. The protein localises to the centromere. In terms of biological role, component of the CENPA-HI complex, a centromeric complex involved in assembly of kinetochore proteins, mitotic progression and chromosome segregation. Involved in kinetochore assembly and required for recovery from spindle damage. In Gallus gallus (Chicken), this protein is Centromere protein O (CENPO).